The primary structure comprises 613 residues: Myrcene synthase, chloroplastic (613 aa).

The transit peptide at 1–46 (MQCMAVHQFAPLLSLLNCSRISSDFGRLFTPKTSTKSRSSTCHPIQ) directs the protein to the chloroplast. 3 residues coordinate (2E)-geranyl diphosphate: Arg-324, Asp-361, and Asp-365. Residues Asp-361 and Asp-365 each contribute to the Mg(2+) site. A DDXXD motif motif is present at residues 361 to 365 (DDIYD). The helical transmembrane segment at 455–475 (IEMAWLSIGGPVILVHAYFCF) threads the bilayer. 2 residues coordinate (2E)-geranyl diphosphate: Arg-503 and Asp-506. Mg(2+)-binding residues include Asp-506, Thr-510, and Glu-514.

The protein belongs to the terpene synthase family. Tpsb subfamily. Mg(2+) is required as a cofactor. It depends on Mn(2+) as a cofactor. As to expression, expressed in trichomes.

Its subcellular location is the plastid. The protein localises to the chloroplast membrane. The catalysed reaction is (2E)-geranyl diphosphate = beta-myrcene + diphosphate. Its pathway is secondary metabolite biosynthesis; terpenoid biosynthesis. Its function is as follows. Monoterpene synthase that catalyzes the formation of myrcene. Can use geranyl diphosphate as substrate, but not farnesyl diphosphate or geranylgeranyl diphosphate. This Humulus lupulus (European hop) protein is Myrcene synthase, chloroplastic.